Consider the following 1565-residue polypeptide: Synemin (1565 aa).

The interval 1-10 (MLSWRLQTGP) is head. The coil 1A stretch occupies residues 11 to 49 (EKAELQELNARLYDYVCRVRELERENLLLEEELRGRRGR). An interaction with DMD and UTRN region spans residues 11 to 320 (EKAELQELNA…YRALLEGESN (310 aa)). Residues 11–322 (EKAELQELNA…ALLEGESNPE (312 aa)) form the IF rod domain. Positions 50–58 (EGLWAEGQA) are linker 1. The interval 59–163 (RCAEEARSLR…ELRARAASLT (105 aa)) is coil 1B. The segment at 164–186 (MHFRARATGPAAPPPRLREVHDS) is linker 12. The coil 2 stretch occupies residues 187-300 (YALLVAESWR…LRDYQDLLQV (114 aa)). Residues 301 to 1565 (KTGLSLEVAT…EEEENDGHWF (1265 aa)) form a tail region. Residues 401–421 (SGYSSSATTQQENSYGKAVSS) form a disordered region. The span at 402–421 (GYSSSATTQQENSYGKAVSS) shows a compositional bias: polar residues. Ser429 is subject to Phosphoserine. A disordered region spans residues 472 to 609 (YRDRRDKVAA…VKDAGGGTGR (138 aa)). The span at 498-577 (KKTEVKATRE…KEKSVREREV (80 aa)) shows a compositional bias: basic and acidic residues. Residues Thr598 and Thr651 each carry the phosphothreonine modification. Residues Ser653 and Ser777 each carry the phosphoserine modification. Basic and acidic residues predominate over residues 1019–1040 (LSKDEASEMEKAVESVVRESLS). A disordered region spans residues 1019-1060 (LSKDEASEMEKAVESVVRESLSRQRSPAPGSPDEEGGAEAPA). 6 positions are modified to phosphoserine: Ser1044, Ser1049, Ser1077, Ser1087, Ser1181, and Ser1184. The tract at residues 1080-1105 (SEVAGGASHSSGQRTPQGPVSATVEV) is disordered. Residues 1087–1105 (SHSSGQRTPQGPVSATVEV) show a composition bias toward polar residues. Positions 1152–1463 (VSAGGDLSQA…GPKETSFTFQ (312 aa)) are interaction with TLN1 and VCL. 2 disordered regions span residues 1198–1221 (EAWG…GRHS) and 1332–1415 (QLGE…ETSE). The interaction with DMD and UTRN stretch occupies residues 1244 to 1563 (GKVGDYFATE…DNEEEENDGH (320 aa)). Residues 1354–1379 (ATHSHTSGRQTVMTEKSTFQSVVSES) show a composition bias toward polar residues. At Ser1435 the chain carries Phosphoserine. Position 1487 is an omega-N-methylarginine (Arg1487). The tract at residues 1505-1525 (FKASAGEGDQAHREQGKEQAM) is disordered. The segment covering 1513–1525 (DQAHREQGKEQAM) has biased composition (basic and acidic residues).

This sequence belongs to the intermediate filament family. As to quaternary structure, interacts with GFAP and VIM. Isoform 1 interacts with TLN1 and VCL. Isoform 2 interacts with DES and DTNA. Isoform 1 and isoform 2 interact with DMD and UTRN. As to expression, isoform 2 is strongly detected in adult heart, fetal skeletal muscles and fetal heart. Isoform 1 is weakly detected in fetal heart and also in fetal skeletal muscle. Isoform 1 and isoform 2 are detected in adult bladder (at protein level). The mRNA is predominantly expressed in heart and muscle with some expression in brain which may be due to tissue-specific isoforms.

The protein localises to the cytoplasm. It localises to the cytoskeleton. The protein resides in the cell junction. Its subcellular location is the adherens junction. Its function is as follows. Type-VI intermediate filament (IF) which plays an important cytoskeletal role within the muscle cell cytoskeleton. It forms heteromeric IFs with desmin and/or vimentin, and via its interaction with cytoskeletal proteins alpha-dystrobrevin, dystrophin, talin-1, utrophin and vinculin, is able to link these heteromeric IFs to adherens-type junctions, such as to the costameres, neuromuscular junctions, and myotendinous junctions within striated muscle cells. This is Synemin from Homo sapiens (Human).